A 363-amino-acid chain; its full sequence is Phosphoserine aminotransferase (363 aa).

L-glutamate is bound at residue R42. Residues 76–77 (GR), W102, T156, D175, and Q198 contribute to the pyridoxal 5'-phosphate site. The residue at position 199 (K199) is an N6-(pyridoxal phosphate)lysine. Residue 240 to 241 (NT) participates in pyridoxal 5'-phosphate binding.

The protein belongs to the class-V pyridoxal-phosphate-dependent aminotransferase family. SerC subfamily. In terms of assembly, homodimer. It depends on pyridoxal 5'-phosphate as a cofactor.

The protein localises to the cytoplasm. The enzyme catalyses O-phospho-L-serine + 2-oxoglutarate = 3-phosphooxypyruvate + L-glutamate. The catalysed reaction is 4-(phosphooxy)-L-threonine + 2-oxoglutarate = (R)-3-hydroxy-2-oxo-4-phosphooxybutanoate + L-glutamate. Its pathway is amino-acid biosynthesis; L-serine biosynthesis; L-serine from 3-phospho-D-glycerate: step 2/3. The protein operates within cofactor biosynthesis; pyridoxine 5'-phosphate biosynthesis; pyridoxine 5'-phosphate from D-erythrose 4-phosphate: step 3/5. Functionally, catalyzes the reversible conversion of 3-phosphohydroxypyruvate to phosphoserine and of 3-hydroxy-2-oxo-4-phosphonooxybutanoate to phosphohydroxythreonine. The sequence is that of Phosphoserine aminotransferase from Shewanella sp. (strain MR-4).